A 116-amino-acid polypeptide reads, in one-letter code: Large ribosomal subunit protein bL20 (116 aa).

Belongs to the bacterial ribosomal protein bL20 family.

Functionally, binds directly to 23S ribosomal RNA and is necessary for the in vitro assembly process of the 50S ribosomal subunit. It is not involved in the protein synthesizing functions of that subunit. The protein is Large ribosomal subunit protein bL20 of Mycoplasmopsis agalactiae (strain NCTC 10123 / CIP 59.7 / PG2) (Mycoplasma agalactiae).